The following is a 242-amino-acid chain: DNA repair protein RecO (242 aa).

Belongs to the RecO family. In terms of assembly, monomer.

Its function is as follows. Involved in DNA repair and RecF pathway recombination. This chain is DNA repair protein RecO, found in Shigella flexneri serotype 5b (strain 8401).